The chain runs to 49 residues: Small, acid-soluble spore protein K (49 aa).

The disordered stretch occupies residues 1–49 (MRNKAKGFPNQVNHKFEGEPGATDAYASKRPNGETNTRPQERMRASGKR). Basic and acidic residues predominate over residues 39–49 (PQERMRASGKR).

This sequence belongs to the SspK family.

It is found in the spore core. In Bacillus pumilus (strain SAFR-032), this protein is Small, acid-soluble spore protein K.